The sequence spans 1364 residues: Poly(A) RNA polymerase gld-2 homolog A (1364 aa).

Positions 27–51 (NSTNTTASPATTNTINTTTKTITTS) are enriched in low complexity. Disordered regions lie at residues 27-97 (NSTN…VVHT), 159-203 (SRPS…EAIT), 315-338 (AVGT…VSST), 417-535 (APAT…STST), and 666-732 (LGLD…LSDA). Residues 66-91 (LEIEDSGRNEPEDLEHGAAKPLEQRK) are compositionally biased toward basic and acidic residues. The segment covering 175–198 (GTTVAASTTPSTTVTTSSGSPGSG) has biased composition (low complexity). The span at 417-426 (APATGAASSS) shows a compositional bias: low complexity. Polar residues predominate over residues 427-444 (DQNVATKRNHQGAATQNN). The segment covering 445–455 (HRNRHNAKKGG) has biased composition (basic residues). The span at 461 to 493 (KELTSNSSESLSNSSSKSQLNKRPSSSSSISPI) shows a compositional bias: low complexity. Over residues 494–504 (KHPHRNYRNRM) the composition is skewed to basic residues. Residues 509–535 (TEPTEQKAATTTVPISNYQPPQQSTST) show a composition bias toward polar residues. Residues aspartate 993 and aspartate 995 each coordinate Mg(2+). Residues 1163-1224 (TLGDLLLSFL…CIEEPFDQTN (62 aa)) form the PAP-associated domain.

Belongs to the DNA polymerase type-B-like family. GLD2 subfamily. Interacts with Fmr1 and eIF-4E. It depends on Mg(2+) as a cofactor. Mn(2+) is required as a cofactor. Expressed in the brain.

The protein localises to the cytoplasm. It is found in the nucleus. It catalyses the reaction RNA(n) + ATP = RNA(n)-3'-adenine ribonucleotide + diphosphate. In terms of biological role, cytoplasmic poly(A) RNA polymerase that adds successive AMP monomers to the 3'-end of specific RNAs, forming a poly(A) tail. In contrast to the canonical nuclear poly(A) RNA polymerase, it only adds poly(A) to selected cytoplasmic mRNAs. Required for formation of long term memory. In Drosophila melanogaster (Fruit fly), this protein is Poly(A) RNA polymerase gld-2 homolog A (Gld2).